A 109-amino-acid polypeptide reads, in one-letter code: 12 kDa heat shock protein (109 aa).

The span at 1 to 21 (MSDAGRKGFGEKASEALKPDS) shows a compositional bias: basic and acidic residues. Positions 1-82 (MSDAGRKGFG…SLADQARDYM (82 aa)) are disordered. A Phosphoserine; by ATM or ATR modification is found at Ser21. Phosphoserine is present on Ser24. 2 stretches are compositionally biased toward basic and acidic residues: residues 28–50 (QGKEYITDKADKVAGKVQPEDNK) and 58–67 (DSAEKGKDNA). A phosphoserine mark is found at Ser59, Ser73, and Ser97.

The protein to S.pombe hsp9 and C.albicans WH11.

Functionally, may play a role in a switch from carbohydrate utilizing metabolism to fatty acid utilizing metabolism. This chain is 12 kDa heat shock protein (HSP12), found in Saccharomyces cerevisiae (strain ATCC 204508 / S288c) (Baker's yeast).